A 190-amino-acid polypeptide reads, in one-letter code: UPF0725 protein At2g20625 (190 aa).

The protein belongs to the UPF0725 (EMB2204) family.

The polypeptide is UPF0725 protein At2g20625 (Arabidopsis thaliana (Mouse-ear cress)).